The chain runs to 243 residues: Transcription factor TFIIS homolog (243 aa).

The TFIIS central domain occupies 77 to 201; it reads MRDIIQMMFF…SQQKVAEKTS (125 aa). A TFIIS-type zinc finger spans residues 202-242; the sequence is QLYKCPNCKQRMCTYREVQTRALDEPSTIFCTCKKCGHEFI. C206, C209, C234, and C237 together coordinate Zn(2+).

The protein belongs to the TFS-II family.

In terms of biological role, putative initiation factor. Necessary for efficient transcription elongation past template-encoded arresting sites. In Ornithodoros (relapsing fever ticks), this protein is Transcription factor TFIIS homolog.